Reading from the N-terminus, the 140-residue chain is Hemoglobin subunit beta (140 aa).

Positions 1–140 constitute a Globin domain; sequence GSDLVSGFWG…VGDALAKAYH (140 aa). Heme b is bound by residues His-57 and His-86.

This sequence belongs to the globin family. In terms of assembly, heterotetramer of two alpha chains and two beta chains. As to expression, red blood cells.

Functionally, involved in oxygen transport from the lung to the various peripheral tissues. The polypeptide is Hemoglobin subunit beta (HBB) (Pelophylax lessonae (Pool frog)).